The primary structure comprises 351 residues: Small ribosomal subunit biogenesis GTPase RsgA 1 (351 aa).

Residues Leu-100 to Leu-258 form the CP-type G domain. GTP-binding positions include Ser-148–Asp-151 and Gly-200–Thr-208. Positions 282, 287, 289, and 295 each coordinate Zn(2+).

Belongs to the TRAFAC class YlqF/YawG GTPase family. RsgA subfamily. As to quaternary structure, monomer. Associates with 30S ribosomal subunit, binds 16S rRNA. Zn(2+) serves as cofactor.

The protein localises to the cytoplasm. Functionally, one of several proteins that assist in the late maturation steps of the functional core of the 30S ribosomal subunit. Helps release RbfA from mature subunits. May play a role in the assembly of ribosomal proteins into the subunit. Circularly permuted GTPase that catalyzes slow GTP hydrolysis, GTPase activity is stimulated by the 30S ribosomal subunit. This Oceanobacillus iheyensis (strain DSM 14371 / CIP 107618 / JCM 11309 / KCTC 3954 / HTE831) protein is Small ribosomal subunit biogenesis GTPase RsgA 1.